The sequence spans 145 residues: Large ribosomal subunit protein bL19 (145 aa).

The protein belongs to the bacterial ribosomal protein bL19 family.

This protein is located at the 30S-50S ribosomal subunit interface and may play a role in the structure and function of the aminoacyl-tRNA binding site. The sequence is that of Large ribosomal subunit protein bL19 from Brachyspira hyodysenteriae (strain ATCC 49526 / WA1).